A 118-amino-acid chain; its full sequence is DLTQFGNMINKMGQSVFDYIYYGCYCGWGGKGKPIDATDRCCFVHDCCYGKMGTYDTKWTSYNYEIQNGGIDCDEDPQKKELCECDRVAAICFANNRNTYNSNYFGHSSSKCTGTEQC.

The Ca(2+) site is built by Tyr25, Gly27, and Gly29. Residue His45 is part of the active site. Asp46 is a Ca(2+) binding site. Asp86 is an active-site residue.

This sequence belongs to the phospholipase A2 family. Group II subfamily. D49 sub-subfamily. Ca(2+) is required as a cofactor. Post-translationally, six disulfide bonds are present. In terms of tissue distribution, expressed by the venom gland.

The protein resides in the secreted. The enzyme catalyses a 1,2-diacyl-sn-glycero-3-phosphocholine + H2O = a 1-acyl-sn-glycero-3-phosphocholine + a fatty acid + H(+). Functionally, PLA2 catalyzes the calcium-dependent hydrolysis of the 2-acyl groups in 3-sn-phosphoglycerides. The sequence is that of Acidic phospholipase A2 from Bitis gabonica (Gaboon adder).